The chain runs to 953 residues: 2-oxoglutarate dehydrogenase E1 component (953 aa).

Belongs to the alpha-ketoglutarate dehydrogenase family. In terms of assembly, homodimer. Part of the 2-oxoglutarate dehydrogenase (OGDH) complex composed of E1 (2-oxoglutarate dehydrogenase), E2 (dihydrolipoamide succinyltransferase) and E3 (dihydrolipoamide dehydrogenase); the complex contains multiple copies of the three enzymatic components (E1, E2 and E3). The cofactor is thiamine diphosphate.

The catalysed reaction is N(6)-[(R)-lipoyl]-L-lysyl-[protein] + 2-oxoglutarate + H(+) = N(6)-[(R)-S(8)-succinyldihydrolipoyl]-L-lysyl-[protein] + CO2. Its function is as follows. E1 component of the 2-oxoglutarate dehydrogenase (OGDH) complex which catalyzes the decarboxylation of 2-oxoglutarate, the first step in the conversion of 2-oxoglutarate to succinyl-CoA and CO(2). The polypeptide is 2-oxoglutarate dehydrogenase E1 component (Oceanobacillus iheyensis (strain DSM 14371 / CIP 107618 / JCM 11309 / KCTC 3954 / HTE831)).